We begin with the raw amino-acid sequence, 79 residues long: Conotoxin TxMEKL-021 (79 aa).

A signal peptide spans 1–19 (MEKLTILLLVAVVLMSTQA). The propeptide occupies 20 to 47 (LPQGGGEKRPRENIRFLSKRKSNAERWR). 3 disulfides stabilise this stretch: C51–C65, C58–C69, and C64–C75.

Belongs to the conotoxin O2 superfamily. In terms of tissue distribution, expressed by the venom duct.

Its subcellular location is the secreted. In Conus textile (Cloth-of-gold cone), this protein is Conotoxin TxMEKL-021.